Consider the following 203-residue polypeptide: HTH-type transcriptional regulator BetI (203 aa).

Positions Pro-8–Leu-68 constitute an HTH tetR-type domain. The H-T-H motif DNA-binding region spans Thr-31–Phe-50.

It participates in amine and polyamine biosynthesis; betaine biosynthesis via choline pathway [regulation]. In terms of biological role, repressor involved in the biosynthesis of the osmoprotectant glycine betaine. It represses transcription of the choline transporter BetT and the genes of BetAB involved in the synthesis of glycine betaine. This is HTH-type transcriptional regulator BetI from Rhizobium meliloti (strain 1021) (Ensifer meliloti).